The following is a 61-amino-acid chain: MNNMKSADNYQQLDNNALEQVVGGKYYGNGVHCTKSGCSVNWGEAFSAGVHRLANGGNGFW.

The propeptide occupies 1 to 24 (MNNMKSADNYQQLDNNALEQVVGG). Cysteines 33 and 38 form a disulfide.

Belongs to the bacteriocin class IIA/YGNGV family.

The protein resides in the secreted. In terms of biological role, active against L.monocytogenes and several lactic acid bacteria. The protein is Bacteriocin leucocin-B of Leuconostoc carnosum.